Consider the following 990-residue polypeptide: Pentatricopeptide repeat-containing protein At4g33170 (990 aa).

PPR repeat units lie at residues 73 to 107 (ERFLINNLISMYSKCGSLTYARRVFDKMPDRDLVS), 109 to 139 (NSILAAYAQSSECVVENIQQAFLLFRILRQD), 144 to 178 (SRMTLSPMLKLCLHSGYVWASESFHGYACKIGLDG), 179 to 209 (DEFVAGALVNIYLKFGKVKEGKVLFEEMPYR), 210 to 244 (DVVLWNLMLKAYLEMGFKEEAIDLSSAFHSSGLNP), 279 to 313 (EIIFRNKGLSEYLHSGQYSALLKCFADMVESDVEC), 314 to 348 (DQVTFILMLATAVKVDSLALGQQVHCMALKLGLDL), 349 to 379 (MLTVSNSLINMYCKLRKFGFARTVFDNMSER), 380 to 414 (DLISWNSVIAGIAQNGLEVEAVCLFMQLLRCGLKP), 415 to 450 (DQYTMTSVLKAASSLPEGLSLSKQVHVHAIKINNVS), 451 to 477 (DSFVSTALIDAYSRNRCMKEAEILFER), 481 to 515 (DLVAWNAMMAGYTQSHDGHKTLKLFALMHKQGERS), 516 to 550 (DDFTLATVFKTCGFLFAINQGKQVHAYAIKSGYDL), 551 to 581 (DLWVSSGILDMYVKCGDMSAAQFAFDSIPVP), 582 to 616 (DDVAWTTMISGCIENGEEERAFHVFSQMRLMGVLP), 617 to 651 (DEFTIATLAKASSCLTALEQGRQIHANALKLNCTN), 652 to 682 (DPFVGTSLVDMYAKCGSIDDAYCLFKRIEMM), 683 to 717 (NITAWNAMLVGLAQHGEGKETLQLFKQMKSLGIKP), 718 to 753 (DKVTFIGVLSACSHSGLVSEAYKHMRSMHGDYGIKP), and 754 to 788 (EIEHYSCLADALGRAGLVKQAENLIESMSMEASAS). Residues 789 to 864 (MYRTLLAACR…DPGFSWIEVK (76 aa)) are type E motif. Residues 865–895 (NKIHIFVVDDRSNRQTELIYRKVKDMIRDIK) form a type E(+) motif region. The interval 896-990 (QEGYVPETDF…DGICSCGDYW (95 aa)) is type DYW motif.

It belongs to the PPR family. PCMP-H subfamily.

This Arabidopsis thaliana (Mouse-ear cress) protein is Pentatricopeptide repeat-containing protein At4g33170 (PCMP-H53).